A 291-amino-acid polypeptide reads, in one-letter code: Probable 2-(5''-triphosphoribosyl)-3'-dephosphocoenzyme-A synthase (291 aa).

The protein belongs to the CitG/MdcB family.

It catalyses the reaction 3'-dephospho-CoA + ATP = 2'-(5''-triphospho-alpha-D-ribosyl)-3'-dephospho-CoA + adenine. Its function is as follows. Involved in the formation of 2-(5''-phosphoribosyl)-3'-dephosphocoenzyme-A, the prosthetic group of the acyl-carrier protein of the malonate decarboxylase. This chain is Probable 2-(5''-triphosphoribosyl)-3'-dephosphocoenzyme-A synthase, found in Pseudomonas fluorescens (strain ATCC BAA-477 / NRRL B-23932 / Pf-5).